A 327-amino-acid polypeptide reads, in one-letter code: Interleukin-12 subunit beta (327 aa).

The signal sequence occupies residues 1 to 22; it reads MHPQQLVVSWFSLVLLTSPIVA. The region spanning 23–106 is the Ig-like C2-type domain; that stretch reads IWELEKNVYV…LSRSLLLLHK (84 aa). The cysteines at positions 50 and 90 are disulfide-linked. N-linked (GlcNAc...) asparagine glycosylation is present at N223. The Fibronectin type-III domain maps to 238 to 327; sequence PPKNLQLRPL…WSEWASVSCS (90 aa).

It belongs to the IL-12B family. As to quaternary structure, heterodimer with IL12A; disulfide-linked. The heterodimer is known as interleukin IL-12. Heterodimer with IL23A; disulfide-linked. The heterodimer is known as interleukin IL-23. Also secreted as a monomer. Interacts with NBR1; this interaction promotes IL-12 secretion.

Its subcellular location is the secreted. Functionally, cytokine that can act as a growth factor for activated T and NK cells, enhance the lytic activity of NK/lymphokine-activated killer cells, and stimulate the production of IFN-gamma by resting PBMC. Its function is as follows. Associates with IL23A to form the IL-23 interleukin, a heterodimeric cytokine which functions in innate and adaptive immunity. IL-23 may constitute with IL-17 an acute response to infection in peripheral tissues. IL-23 binds to a heterodimeric receptor complex composed of IL12RB1 and IL23R, activates the Jak-Stat signaling cascade, stimulates memory rather than naive T-cells and promotes production of pro-inflammatory cytokines. IL-23 induces autoimmune inflammation and thus may be responsible for autoimmune inflammatory diseases and may be important for tumorigenesis. The sequence is that of Interleukin-12 subunit beta (IL12B) from Cervus elaphus (Red deer).